Reading from the N-terminus, the 263-residue chain is Acetylglutamate kinase (263 aa).

Substrate-binding positions include glycine 48–glycine 49, arginine 70, and asparagine 162.

The protein belongs to the acetylglutamate kinase family. ArgB subfamily.

It is found in the cytoplasm. It carries out the reaction N-acetyl-L-glutamate + ATP = N-acetyl-L-glutamyl 5-phosphate + ADP. It participates in amino-acid biosynthesis; L-arginine biosynthesis; N(2)-acetyl-L-ornithine from L-glutamate: step 2/4. Functionally, catalyzes the ATP-dependent phosphorylation of N-acetyl-L-glutamate. This Vibrio campbellii (strain ATCC BAA-1116) protein is Acetylglutamate kinase.